A 169-amino-acid chain; its full sequence is Cell division inhibitor SulA (169 aa).

The ftsZ binding stretch occupies residues 106–112 (ALRTGNY). The segment at 162–169 (KIHSNLYH) is lon protease binding.

It belongs to the SulA family. Interacts with FtsZ. Post-translationally, is rapidly cleaved and degraded by the Lon protease once DNA damage is repaired.

Functionally, component of the SOS system and an inhibitor of cell division. Accumulation of SulA causes rapid cessation of cell division and the appearance of long, non-septate filaments. In the presence of GTP, binds a polymerization-competent form of FtsZ in a 1:1 ratio, thus inhibiting FtsZ polymerization and therefore preventing it from participating in the assembly of the Z ring. This mechanism prevents the premature segregation of damaged DNA to daughter cells during cell division. The sequence is that of Cell division inhibitor SulA from Escherichia coli O45:K1 (strain S88 / ExPEC).